Reading from the N-terminus, the 224-residue chain is Large ribosomal subunit protein uL1m (224 aa).

The protein belongs to the universal ribosomal protein uL1 family.

Its subcellular location is the mitochondrion. This is Large ribosomal subunit protein uL1m (RPL1) from Reclinomonas americana.